Here is a 164-residue protein sequence, read N- to C-terminus: Magnesium-dependent phosphatase 1 (164 aa).

Residue Asp11 is the Nucleophile of the active site. A Mg(2+)-binding site is contributed by Asp11. Phosphate is bound by residues Leu12 and Asp13. Residue Asp13 coordinates Mg(2+). Asp13 serves as the catalytic Proton donor. Residue Trp20 coordinates substrate. Positions 69, 70, and 100 each coordinate phosphate. Residue Arg70 participates in substrate binding. Position 123 (Asp123) interacts with Mg(2+).

It belongs to the HAD-like hydrolase superfamily. It depends on Mg(2+) as a cofactor.

The enzyme catalyses O-phospho-L-tyrosyl-[protein] + H2O = L-tyrosyl-[protein] + phosphate. Inhibited by vanadate and zinc, and slightly by calcium. Magnesium-dependent phosphatase which may act as a tyrosine phosphatase. This chain is Magnesium-dependent phosphatase 1 (Mdp1), found in Mus musculus (Mouse).